We begin with the raw amino-acid sequence, 810 residues long: Phospholipase D alpha 1 (810 aa).

Residues 1 to 126 form the C2 domain; the sequence is MAQHLLHGTL…INGEEVDQWV (126 aa). Position 187 (Asp-187) interacts with Ca(2+). The region spanning 327-366 is the PLD phosphodiesterase 1 domain; that stretch reads TMFTHHQKIVVVDSEMPSRGGSEMRRIVSFVGGIDLCDGR. Residues His-332, Lys-334, and Asp-339 contribute to the active site. His-332 provides a ligand contact to a 1,2-diacyl-sn-glycero-3-phosphate. The Ca(2+) site is built by His-372 and His-406. A 1,2-diacyl-sn-glycero-3-phosphate contacts are provided by Gln-522 and His-661. A PLD phosphodiesterase 2 domain is found at 656-683; that stretch reads FMIYVHTKMMIVDDEYIIIGSANINQRS. Residues His-661, Lys-663, and Asp-668 contribute to the active site. Glu-722 provides a ligand contact to Ca(2+).

It belongs to the phospholipase D family. C2-PLD subfamily. Interacts with GPA1. This binding inhibits PLDALPHA1 activity and is relieved by GTP. Ca(2+) is required as a cofactor. As to expression, highly expressed in roots, stems and flowers, moderately in leaves, seedlings and siliques. Not detected in seeds.

Its subcellular location is the cytoplasm. The protein localises to the cell membrane. It is found in the mitochondrion membrane. It localises to the microsome membrane. The protein resides in the vacuole. Its subcellular location is the cytoplasmic vesicle. The protein localises to the clathrin-coated vesicle. It catalyses the reaction a 1,2-diacyl-sn-glycero-3-phosphocholine + H2O = a 1,2-diacyl-sn-glycero-3-phosphate + choline + H(+). Not inhibited by neomycin. Its function is as follows. Hydrolyzes glycerol-phospholipids at the terminal phosphodiesteric bond to generate phosphatidic acids (PA). Plays an important role in various cellular processes, including phytohormone action and response to stress, characterized by acidification of the cell. Involved in wound induction of jasmonic acid. May be involved in membrane lipid remodeling. Probably involved in freezing tolerance by modulating the cold-responsive genes and accumulation of osmolytes. Can use phosphatidylcholine (PC), phosphatidylethanolamine (PE) and phosphatidylglycerol (PG) as substrates, both in presence or in absence of PIP2. Its main substrate is phosphatidylcholine. Stimulates the intrinsic GTPase activity of GPA1 upon binding. Mediates the abscisic acid effects on stomata through interaction with GPA1 and the production of phosphatidic acid that bind to ABI1. Involved in seed aging and deterioration. Involved in microtubule stabilization and salt tolerance. Involved in abscisic acid-induced stomatal closure. The polypeptide is Phospholipase D alpha 1 (Arabidopsis thaliana (Mouse-ear cress)).